Consider the following 152-residue polypeptide: Large ribosomal subunit protein uL15 (152 aa).

A disordered region spans residues 1-55 (MRLHELKPNEGATHKKKRVGRGIGSGHGKTSTKGQKGQTSRSGDSKLPARFEGGQ). Positions 28 to 42 (GKTSTKGQKGQTSRS) are enriched in polar residues.

This sequence belongs to the universal ribosomal protein uL15 family. Part of the 50S ribosomal subunit.

In terms of biological role, binds to the 23S rRNA. The polypeptide is Large ribosomal subunit protein uL15 (Sulfurihydrogenibium sp. (strain YO3AOP1)).